Reading from the N-terminus, the 73-residue chain is Aminopeptidase G (73 aa).

The disordered stretch occupies residues 39-73 (GRRAASSSWPGRGSSRRWRPGRRTGAAARGCWRAP). Composition is skewed to low complexity over residues 42–51 (AASSSWPGRG) and 61–73 (RTGAAARGCWRAP).

This sequence belongs to the peptidase M1 family. The cofactor is Zn(2+).

It is found in the cytoplasm. In terms of biological role, hydrolyzes preferentially the N-terminal glycine and can also hydrolyze other amino acids which are used by PepN but is unable to hydrolyze basic amino acids. This is Aminopeptidase G (pepG) from Streptomyces lividans.